The primary structure comprises 259 residues: Short-chain dehydrogenase reductase 5 (259 aa).

12 to 36 (IITGGASGIGAEAARLFTDHGAKVV) lines the NAD(+) pocket. Residue Ser144 coordinates substrate. Tyr157 serves as the catalytic Proton acceptor.

Belongs to the short-chain dehydrogenases/reductases (SDR) family.

This Arabidopsis thaliana (Mouse-ear cress) protein is Short-chain dehydrogenase reductase 5 (SDR5).